A 370-amino-acid chain; its full sequence is Probable trehalose-phosphate phosphatase J (370 aa).

This sequence belongs to the trehalose phosphatase family. The cofactor is a divalent metal cation.

The enzyme catalyses alpha,alpha-trehalose 6-phosphate + H2O = alpha,alpha-trehalose + phosphate. The protein operates within glycan biosynthesis; trehalose biosynthesis. Its function is as follows. Removes the phosphate from trehalose 6-phosphate to produce free trehalose. Trehalose accumulation in plant may improve abiotic stress tolerance. This Arabidopsis thaliana (Mouse-ear cress) protein is Probable trehalose-phosphate phosphatase J (TPPJ).